The following is a 209-amino-acid chain: Ribosomal RNA large subunit methyltransferase E (209 aa).

Gly-63, Trp-65, Asp-83, Asp-99, and Asp-124 together coordinate S-adenosyl-L-methionine. Lys-164 functions as the Proton acceptor in the catalytic mechanism.

It belongs to the class I-like SAM-binding methyltransferase superfamily. RNA methyltransferase RlmE family.

Its subcellular location is the cytoplasm. It carries out the reaction uridine(2552) in 23S rRNA + S-adenosyl-L-methionine = 2'-O-methyluridine(2552) in 23S rRNA + S-adenosyl-L-homocysteine + H(+). Specifically methylates the uridine in position 2552 of 23S rRNA at the 2'-O position of the ribose in the fully assembled 50S ribosomal subunit. The chain is Ribosomal RNA large subunit methyltransferase E from Aeromonas hydrophila subsp. hydrophila (strain ATCC 7966 / DSM 30187 / BCRC 13018 / CCUG 14551 / JCM 1027 / KCTC 2358 / NCIMB 9240 / NCTC 8049).